We begin with the raw amino-acid sequence, 66 residues long: Large ribosomal subunit protein bL35 (66 aa).

Residues 1-16 (MPKQKTHRASAKRFKR) are compositionally biased toward basic residues. Residues 1 to 21 (MPKQKTHRASAKRFKRTGSGG) are disordered.

Belongs to the bacterial ribosomal protein bL35 family.

This Streptococcus gordonii (strain Challis / ATCC 35105 / BCRC 15272 / CH1 / DL1 / V288) protein is Large ribosomal subunit protein bL35.